Consider the following 235-residue polypeptide: Large ribosomal subunit protein bL25 (235 aa).

2 disordered regions span residues 1–21 and 210–235; these read MADN…PARR and APAA…GAKK. Residues 210 to 222 are compositionally biased toward low complexity; sequence APAAGAAPAAGGE. A compositionally biased stretch (basic and acidic residues) spans 223-235; sequence AAKKAPEAKGAKK.

It belongs to the bacterial ribosomal protein bL25 family. CTC subfamily. As to quaternary structure, part of the 50S ribosomal subunit; part of the 5S rRNA/L5/L18/L25 subcomplex. Contacts the 5S rRNA. Binds to the 5S rRNA independently of L5 and L18.

In terms of biological role, this is one of the proteins that binds to the 5S RNA in the ribosome where it forms part of the central protuberance. The sequence is that of Large ribosomal subunit protein bL25 from Anaeromyxobacter sp. (strain Fw109-5).